A 628-amino-acid polypeptide reads, in one-letter code: NUAK family SNF1-like kinase 2 (628 aa).

Met-1 bears the N-acetylmethionine mark. The region spanning 53 to 303 (YEFLETLGKG…LEDVASHWWV (251 aa)) is the Protein kinase domain. ATP-binding positions include 59 to 67 (LGKGTYGKV) and Lys-81. The active-site Proton acceptor is Asp-175. Phosphothreonine; by LKB1 is present on Thr-208. A disordered region spans residues 355 to 493 (KQHAPGGGST…KEQKPPQASG (139 aa)). Ser-435 carries the phosphoserine modification. The span at 457 to 469 (SGYYSSPEPSESG) shows a compositional bias: low complexity. Phosphoserine is present on residues Ser-523, Ser-544, Ser-547, and Ser-573. Positions 531–562 (RPLARASRPSGAVSEDSILSSESFDQLDLPER) are disordered.

Belongs to the protein kinase superfamily. CAMK Ser/Thr protein kinase family. SNF1 subfamily. Mg(2+) is required as a cofactor. Phosphorylated at Thr-208 by STK11/LKB1 in complex with STE20-related adapter-alpha (STRADA) pseudo kinase and CAB39. Autophosphorylation is also possible at Thr-208.

It catalyses the reaction L-seryl-[protein] + ATP = O-phospho-L-seryl-[protein] + ADP + H(+). It carries out the reaction L-threonyl-[protein] + ATP = O-phospho-L-threonyl-[protein] + ADP + H(+). With respect to regulation, activated by phosphorylation on Thr-208. Functionally, stress-activated kinase involved in tolerance to glucose starvation. Induces cell-cell detachment by increasing F-actin conversion to G-actin. Expression is induced by CD95 or TNF-alpha, via NF-kappa-B. Protects cells from CD95-mediated apoptosis and is required for the increased motility and invasiveness of CD95-activated tumor cells. Phosphorylates LATS1 and LATS2. Plays a key role in neural tube closure during embryonic development through LATS2 phosphorylation and regulation of the nuclear localization of YAP1 a critical downstream regulatory target in the Hippo signaling pathway. In Homo sapiens (Human), this protein is NUAK family SNF1-like kinase 2.